Reading from the N-terminus, the 196-residue chain is Large ribosomal subunit protein uL10 (196 aa).

The tract at residues 167 to 196 (EKKAAEGPAEAPQPATEPPAEAPEAPADAE) is disordered.

This sequence belongs to the universal ribosomal protein uL10 family. As to quaternary structure, part of the ribosomal stalk of the 50S ribosomal subunit. The N-terminus interacts with L11 and the large rRNA to form the base of the stalk. The C-terminus forms an elongated spine to which L12 dimers bind in a sequential fashion forming a multimeric L10(L12)X complex.

Forms part of the ribosomal stalk, playing a central role in the interaction of the ribosome with GTP-bound translation factors. The chain is Large ribosomal subunit protein uL10 from Mycolicibacterium paratuberculosis (strain ATCC BAA-968 / K-10) (Mycobacterium paratuberculosis).